The sequence spans 369 residues: Chaperone protein DnaJ (369 aa).

In terms of domain architecture, J spans aspartate 5–glycine 69. Residues glycine 131–lysine 213 form a CR-type zinc finger. Residues cysteine 144, cysteine 147, cysteine 161, cysteine 164, cysteine 187, cysteine 190, cysteine 201, and cysteine 204 each contribute to the Zn(2+) site. CXXCXGXG motif repeat units follow at residues cysteine 144 to glycine 151, cysteine 161 to glycine 168, cysteine 187 to glycine 194, and cysteine 201 to glycine 208.

The protein belongs to the DnaJ family. In terms of assembly, homodimer. Requires Zn(2+) as cofactor.

Its subcellular location is the cytoplasm. Functionally, participates actively in the response to hyperosmotic and heat shock by preventing the aggregation of stress-denatured proteins and by disaggregating proteins, also in an autonomous, DnaK-independent fashion. Unfolded proteins bind initially to DnaJ; upon interaction with the DnaJ-bound protein, DnaK hydrolyzes its bound ATP, resulting in the formation of a stable complex. GrpE releases ADP from DnaK; ATP binding to DnaK triggers the release of the substrate protein, thus completing the reaction cycle. Several rounds of ATP-dependent interactions between DnaJ, DnaK and GrpE are required for fully efficient folding. Also involved, together with DnaK and GrpE, in the DNA replication of plasmids through activation of initiation proteins. This Acholeplasma laidlawii protein is Chaperone protein DnaJ.